A 209-amino-acid chain; its full sequence is Uracil phosphoribosyltransferase (209 aa).

5-phospho-alpha-D-ribose 1-diphosphate is bound by residues Arg-79, Arg-104, and 131-139; that span reads DPMLATGGS. Uracil is bound by residues Ile-194 and 199–201; that span reads GDA. Position 200 (Asp-200) interacts with 5-phospho-alpha-D-ribose 1-diphosphate.

The protein belongs to the UPRTase family. Mg(2+) serves as cofactor.

The enzyme catalyses UMP + diphosphate = 5-phospho-alpha-D-ribose 1-diphosphate + uracil. Its pathway is pyrimidine metabolism; UMP biosynthesis via salvage pathway; UMP from uracil: step 1/1. With respect to regulation, allosterically activated by GTP. Its function is as follows. Catalyzes the conversion of uracil and 5-phospho-alpha-D-ribose 1-diphosphate (PRPP) to UMP and diphosphate. This chain is Uracil phosphoribosyltransferase, found in Clostridium botulinum (strain Alaska E43 / Type E3).